The following is a 254-amino-acid chain: tRNA (guanine-N(7)-)-methyltransferase (254 aa).

Residues E82, E107, D134, and D157 each contribute to the S-adenosyl-L-methionine site. Residue D157 is part of the active site. Substrate-binding positions include K161, D193, and 233-236 (TKFE).

Belongs to the class I-like SAM-binding methyltransferase superfamily. TrmB family.

It carries out the reaction guanosine(46) in tRNA + S-adenosyl-L-methionine = N(7)-methylguanosine(46) in tRNA + S-adenosyl-L-homocysteine. It participates in tRNA modification; N(7)-methylguanine-tRNA biosynthesis. Its function is as follows. Catalyzes the formation of N(7)-methylguanine at position 46 (m7G46) in tRNA. The sequence is that of tRNA (guanine-N(7)-)-methyltransferase from Corynebacterium jeikeium (strain K411).